The chain runs to 474 residues: Sensor protein CreC (474 aa).

The Periplasmic segment spans residues 1-6 (MRIGMR). Residues 7-27 (LLLGYFLLVAVAAWFVLAIFV) traverse the membrane as a helical segment. Over 28–146 (KEVKPGVRRA…LQNPADPESS (119 aa)) the chain is Cytoplasmic. Residues 147 to 167 (VMYVAAPIMDGSRLIGVLSVG) form a helical membrane-spanning segment. The Periplasmic portion of the chain corresponds to 168–183 (KPNAAMAPVIKRSERR). Residues 184–204 (ILWASAILLGIALVIGAGMVW) form a helical membrane-spanning segment. The HAMP domain occupies 205–255 (WINRSIARLTRYADSVTDNKPVPLPDLGSSELRKLAQALESMRVKLEGKNY). Over 205-474 (WINRSIARLT…ASLRLHRHFT (270 aa)) the chain is Cytoplasmic. The Histidine kinase domain maps to 262 to 473 (ALTHELKSPL…LASLRLHRHF (212 aa)). His-265 bears the Phosphohistidine; by autocatalysis mark.

In terms of processing, autophosphorylated.

The protein resides in the cell inner membrane. It carries out the reaction ATP + protein L-histidine = ADP + protein N-phospho-L-histidine.. Member of the two-component regulatory system CreC/CreB involved in catabolic regulation. CreC may function as a membrane-associated protein kinase that phosphorylates CreB in response to environmental signals. CreC can also phosphorylate PhoB. The chain is Sensor protein CreC (creC) from Escherichia coli (strain K12).